The sequence spans 55 residues: Potassium channel toxin alpha-KTx 17.1 (55 aa).

A signal peptide spans 1-23 (MKFIIVLILISVLIATIVPVNEA). The residue at position 24 (glutamine 24) is a Pyrrolidone carboxylic acid. 3 disulfides stabilise this stretch: cysteine 27–cysteine 43, cysteine 33–cysteine 48, and cysteine 37–cysteine 50. Threonine 53 bears the Threonine amide mark.

Belongs to the short scorpion toxin superfamily. Potassium channel inhibitor family. Alpha-KTx 17 subfamily. In terms of tissue distribution, expressed by the venom gland.

It is found in the secreted. In terms of biological role, blocker of potassium channels, which inhibits both the delayed rectifier and fast transient potassium current. The inhibition is reversible and voltage-independent. It causes a depolarizing shift of the steady-state activation curve of the currents, without changing their steady-state inactivation behavior. In Olivierus martensii (Manchurian scorpion), this protein is Potassium channel toxin alpha-KTx 17.1.